The primary structure comprises 98 residues: Citrate lyase acyl carrier protein (98 aa).

S14 bears the O-(phosphoribosyl dephospho-coenzyme A)serine mark.

It belongs to the CitD family. In terms of assembly, oligomer with a subunit composition of (alpha,beta,gamma)6.

It localises to the cytoplasm. Covalent carrier of the coenzyme of citrate lyase. This is Citrate lyase acyl carrier protein from Shigella flexneri.